Reading from the N-terminus, the 161-residue chain is Nucleotide-binding protein xcc-b100_3818 (161 aa).

This sequence belongs to the YajQ family.

Nucleotide-binding protein. The sequence is that of Nucleotide-binding protein xcc-b100_3818 from Xanthomonas campestris pv. campestris (strain B100).